We begin with the raw amino-acid sequence, 203 residues long: MSDNGDNNTKSPQHNNPQPNEKSDGKVQPGQPQVNPQRKFTAGINKKKEKLNEDLSELDKLRQQLIHFQNQFRLAVADKENVKRIMQKNIDDTSIYAISNFARDLLSSCDNLETSLKNLKEGDSIHAGVLMTYKELLNTLERHNITRIDPIGEKFNPQFHKAVSQMVDAEKDDNTILHVVQPGYIIKDKLLRAASVIISKKSD.

The segment covering 1–20 (MSDNGDNNTKSPQHNNPQPN) has biased composition (polar residues). A disordered region spans residues 1 to 46 (MSDNGDNNTKSPQHNNPQPNEKSDGKVQPGQPQVNPQRKFTAGINK).

The protein belongs to the GrpE family. Homodimer.

It is found in the cytoplasm. Functionally, participates actively in the response to hyperosmotic and heat shock by preventing the aggregation of stress-denatured proteins, in association with DnaK and GrpE. It is the nucleotide exchange factor for DnaK and may function as a thermosensor. Unfolded proteins bind initially to DnaJ; upon interaction with the DnaJ-bound protein, DnaK hydrolyzes its bound ATP, resulting in the formation of a stable complex. GrpE releases ADP from DnaK; ATP binding to DnaK triggers the release of the substrate protein, thus completing the reaction cycle. Several rounds of ATP-dependent interactions between DnaJ, DnaK and GrpE are required for fully efficient folding. The polypeptide is Protein GrpE (Ehrlichia chaffeensis (strain ATCC CRL-10679 / Arkansas)).